The sequence spans 714 residues: Phosphoribosylformylglycinamidine synthase subunit PurL (714 aa).

Residue His-34 is part of the active site. Tyr-37 contributes to the ATP binding site. Glu-78 contributes to the Mg(2+) binding site. Substrate contacts are provided by residues 79–82 and Arg-101; that span reads SHNH. Catalysis depends on His-80, which acts as the Proton acceptor. Asp-102 is a Mg(2+) binding site. Gln-226 provides a ligand contact to substrate. Residue Asp-254 coordinates Mg(2+). 298–300 serves as a coordination point for substrate; sequence ESQ. Residues Asp-474 and Gly-511 each contribute to the ATP site. A Mg(2+)-binding site is contributed by Asn-512. A substrate-binding site is contributed by Ser-514.

This sequence belongs to the FGAMS family. In terms of assembly, monomer. Part of the FGAM synthase complex composed of 1 PurL, 1 PurQ and 2 PurS subunits.

It is found in the cytoplasm. It carries out the reaction N(2)-formyl-N(1)-(5-phospho-beta-D-ribosyl)glycinamide + L-glutamine + ATP + H2O = 2-formamido-N(1)-(5-O-phospho-beta-D-ribosyl)acetamidine + L-glutamate + ADP + phosphate + H(+). It functions in the pathway purine metabolism; IMP biosynthesis via de novo pathway; 5-amino-1-(5-phospho-D-ribosyl)imidazole from N(2)-formyl-N(1)-(5-phospho-D-ribosyl)glycinamide: step 1/2. In terms of biological role, part of the phosphoribosylformylglycinamidine synthase complex involved in the purines biosynthetic pathway. Catalyzes the ATP-dependent conversion of formylglycinamide ribonucleotide (FGAR) and glutamine to yield formylglycinamidine ribonucleotide (FGAM) and glutamate. The FGAM synthase complex is composed of three subunits. PurQ produces an ammonia molecule by converting glutamine to glutamate. PurL transfers the ammonia molecule to FGAR to form FGAM in an ATP-dependent manner. PurS interacts with PurQ and PurL and is thought to assist in the transfer of the ammonia molecule from PurQ to PurL. The chain is Phosphoribosylformylglycinamidine synthase subunit PurL from Methanothermobacter marburgensis (strain ATCC BAA-927 / DSM 2133 / JCM 14651 / NBRC 100331 / OCM 82 / Marburg) (Methanobacterium thermoautotrophicum).